Here is a 97-residue protein sequence, read N- to C-terminus: Large ribosomal subunit protein uL23 (97 aa).

This sequence belongs to the universal ribosomal protein uL23 family. In terms of assembly, part of the 50S ribosomal subunit. Contacts protein L29, and trigger factor when it is bound to the ribosome.

Its function is as follows. One of the early assembly proteins it binds 23S rRNA. One of the proteins that surrounds the polypeptide exit tunnel on the outside of the ribosome. Forms the main docking site for trigger factor binding to the ribosome. The protein is Large ribosomal subunit protein uL23 of Anaeromyxobacter sp. (strain Fw109-5).